The following is a 394-amino-acid chain: Tryptophan synthase beta chain (394 aa).

At lysine 90 the chain carries N6-(pyridoxal phosphate)lysine.

Belongs to the TrpB family. Tetramer of two alpha and two beta chains. Pyridoxal 5'-phosphate is required as a cofactor.

The catalysed reaction is (1S,2R)-1-C-(indol-3-yl)glycerol 3-phosphate + L-serine = D-glyceraldehyde 3-phosphate + L-tryptophan + H2O. It participates in amino-acid biosynthesis; L-tryptophan biosynthesis; L-tryptophan from chorismate: step 5/5. Its function is as follows. The beta subunit is responsible for the synthesis of L-tryptophan from indole and L-serine. This is Tryptophan synthase beta chain from Parabacteroides distasonis (strain ATCC 8503 / DSM 20701 / CIP 104284 / JCM 5825 / NCTC 11152).